A 231-amino-acid polypeptide reads, in one-letter code: Ribosome maturation factor RimM (231 aa).

The tract at residues 1–29 (MSERDSGSSGRAKAKRQPGAKAPFGPFVR) is disordered. The PRC barrel domain maps to 150–231 (TDEYYWVDLV…KIIVDWEADY (82 aa)).

It belongs to the RimM family. As to quaternary structure, binds ribosomal protein uS19.

It is found in the cytoplasm. An accessory protein needed during the final step in the assembly of 30S ribosomal subunit, possibly for assembly of the head region. Essential for efficient processing of 16S rRNA. May be needed both before and after RbfA during the maturation of 16S rRNA. It has affinity for free ribosomal 30S subunits but not for 70S ribosomes. The polypeptide is Ribosome maturation factor RimM (Paraburkholderia phymatum (strain DSM 17167 / CIP 108236 / LMG 21445 / STM815) (Burkholderia phymatum)).